The sequence spans 570 residues: Periplasmic trehalase (570 aa).

A signal peptide spans 1–34 (MIPPEIRRSVLLQKAIKLALAGTLLTFASFSATA). Substrate-binding positions include arginine 159, 166 to 167 (WD), asparagine 203, 212 to 214 (RSQ), 284 to 286 (RPE), and glycine 317. Active-site proton donor/acceptor residues include aspartate 319 and glutamate 503. Residue glutamate 518 coordinates substrate. The disordered stretch occupies residues 544-570 (KPCDSVPSTRPASLSATPTKTPSAATQ). Positions 554-570 (PASLSATPTKTPSAATQ) are enriched in low complexity.

Belongs to the glycosyl hydrolase 37 family. As to quaternary structure, monomer.

It is found in the periplasm. The enzyme catalyses alpha,alpha-trehalose + H2O = alpha-D-glucose + beta-D-glucose. Its function is as follows. Provides the cells with the ability to utilize trehalose at high osmolarity by splitting it into glucose molecules that can subsequently be taken up by the phosphotransferase-mediated uptake system. The polypeptide is Periplasmic trehalase (Salmonella choleraesuis (strain SC-B67)).